Reading from the N-terminus, the 344-residue chain is Cell adhesion molecule CEACAM6 (344 aa).

The N-terminal stretch at 1–34 (MGPPSAPPCRLHVPWKEVLLTASLLTFWNPPTTA) is a signal peptide. Residues 35–142 (KLTIESTPFN…EATGQFHVYP (108 aa)) form the Ig-like V-type domain. N-linked (GlcNAc...) asparagine glycans are attached at residues asparagine 104, asparagine 111, asparagine 115, asparagine 152, asparagine 173, asparagine 197, asparagine 224, asparagine 256, asparagine 274, asparagine 288, asparagine 292, and asparagine 309. 2 Ig-like C2-type domains span residues 145–232 (PKPS…VTLN) and 240–314 (PTIS…TTVT). Cysteine 167 and cysteine 215 form a disulfide bridge. Residues cysteine 259 and cysteine 299 are joined by a disulfide bond. Glycine 320 is lipidated: GPI-anchor amidated glycine. Residues 321–344 (SAPVLSAVATVGITIGVLARVALI) constitute a propeptide, removed in mature form.

It belongs to the immunoglobulin superfamily. CEA family. Homodimer; homodimerizes via its Ig-like V-type domain. Heterodimer with CEACAM8; heterodimerizes via its Ig-like V-type domain. Glycosylated. In terms of tissue distribution, expressed in neutrophils. Expressed in columnar epithelial and goblet cells of the colon. Expressed in numerous tumor cell lines (at protein level).

Its subcellular location is the cell membrane. It is found in the apical cell membrane. The protein localises to the cell surface. Cell surface glycoprotein that plays a role in cell adhesion and tumor progression. Intercellular adhesion occurs in a calcium- and fibronectin-independent manner. Mediates homophilic and heterophilic cell adhesion with other carcinoembryonic antigen-related cell adhesion molecules, such as CEACAM5 and CEACAM8. Heterophilic interaction with CEACAM8 occurs in activated neutrophils. Plays a role in neutrophil adhesion to cytokine-activated endothelial cells. Plays a role in cell migration and cell adhesion to endothelial cells. In Homo sapiens (Human), this protein is Cell adhesion molecule CEACAM6.